Here is a 264-residue protein sequence, read N- to C-terminus: uncharacterized protein (264 aa).

Composition is skewed to polar residues over residues M1–S18, S73–N83, and K126–L139. Disordered stretches follow at residues M1–S47 and R68–E264. A compositionally biased stretch (low complexity) spans S149–A171. Residues L194–R212 are compositionally biased toward basic and acidic residues. Phosphoserine occurs at positions 214, 215, 241, and 250.

This is an uncharacterized protein from Bos taurus (Bovine).